The primary structure comprises 186 residues: Probable peptidoglycan L,D-endopeptidase MepK (186 aa).

Positions 1–30 are cleaved as a signal peptide; sequence MNYVDQNKRKWLSLGGIALGISILPNSVLA. The Zn(2+) site is built by His134, Asp141, and His174.

The protein belongs to the peptidase M15 family. Requires Zn(2+) as cofactor.

It participates in cell wall biogenesis; cell wall polysaccharide biosynthesis. In terms of biological role, l,D-endopeptidase that cleaves meso-diaminopimelic acid (mDAP)-mDAP cross-links in peptidoglycan. It works in conjunction with other elongation-specific D,D-endopeptidases to make space for efficient incorporation of nascent peptidoglycan strands into the sacculus and thus enable cell wall expansion. The polypeptide is Probable peptidoglycan L,D-endopeptidase MepK (Haemophilus influenzae (strain ATCC 51907 / DSM 11121 / KW20 / Rd)).